The chain runs to 298 residues: Cyclin-dependent kinase 2 (298 aa).

Residue methionine 1 is modified to N-acetylmethionine. The Protein kinase domain occupies 4–286 (FQKVEKIGEG…AKAALAHPFF (283 aa)). Lysine 6 bears the N6-acetyllysine mark. Residue 10–18 (IGEGTYGVV) participates in ATP binding. The residue at position 14 (threonine 14) is a Phosphothreonine. At tyrosine 15 the chain carries Phosphotyrosine; by WEE1. Position 19 is a phosphotyrosine (tyrosine 19). Residues lysine 33, 81-83 (EFL), and aspartate 86 contribute to the ATP site. Aspartate 127 functions as the Proton acceptor in the catalytic mechanism. ATP-binding positions include 129–132 (KPQN) and aspartate 145. 2 residues coordinate Mg(2+): asparagine 132 and aspartate 145. Phosphothreonine; by CAK and CCRK is present on threonine 160.

This sequence belongs to the protein kinase superfamily. CMGC Ser/Thr protein kinase family. CDC2/CDKX subfamily. In terms of assembly, found in a complex with CABLES1, CCNA1 and CCNE1. Interacts with CABLES1. Interacts with UHRF2. Part of a complex consisting of UHRF2, CDK2 and CCNE1. Interacts with the Speedy/Ringo proteins SPDYA and SPDYC. Interaction with SPDYA promotes kinase activation via a conformation change that alleviates obstruction of the substrate-binding cleft by the T-loop. Found in a complex with both SPDYA and CDKN1B/KIP1. Binds to RB1 and CDK7. Binding to CDKN1A (p21) leads to CDK2/cyclin E inactivation at the G1-S phase DNA damage checkpoint, thereby arresting cells at the G1-S transition during DNA repair. Associated with PTPN6 and beta-catenin/CTNNB1. Interacts with CACUL1. May interact with CEP63. Interacts with ANKRD17. Interacts with CEBPA (when phosphorylated). Forms a ternary complex with CCNA2 and CDKN1B; CDKN1B inhibits the kinase activity of CDK2 through conformational rearrangements. Interacts with cyclins A, B1, B3, D, or E. Interacts with CDK2AP2. Mg(2+) serves as cofactor. Post-translationally, phosphorylated at Thr-160 by CDK7 in a CAK complex. Phosphorylation at Thr-160 promotes kinase activity, whereas phosphorylation at Tyr-15 by WEE1 reduces slightly kinase activity. Phosphorylated on Thr-14 and Tyr-15 during S and G2 phases before being dephosphorylated by CDC25A. Nitrosylated after treatment with nitric oxide (DETA-NO).

The protein localises to the cytoplasm. It is found in the cytoskeleton. The protein resides in the microtubule organizing center. It localises to the centrosome. Its subcellular location is the nucleus. The protein localises to the cajal body. It is found in the endosome. The catalysed reaction is L-seryl-[protein] + ATP = O-phospho-L-seryl-[protein] + ADP + H(+). It catalyses the reaction L-threonyl-[protein] + ATP = O-phospho-L-threonyl-[protein] + ADP + H(+). Phosphorylation at Thr-14 or Tyr-15 inactivates the enzyme, while phosphorylation at Thr-160 activates it. Inhibited by 1,25-dihydroxyvitamin D(3) (1,25-(OH)(2)D(3)), AG-024322, N-(4-Piperidinyl)-4-(2,6-dichlorobenzoylamino)-1H-pyrazole-3-carboxamide (AT7519), R547 (Ro-4584820), purine, pyrimidine and pyridine derivatives, 2-aminopyrimidines, paullones, thiazo derivatives, macrocyclic quinoxalin-2-one, pyrazolo[1,5-a]-1,3,5-triazine, pyrazolo[1,5-a]pyrimidine, 2-(1-ethyl-2-hydroxyethylamino)-6-benzylamino-9-isopropylpurine (roscovitine, seliciclib and CYC202), SNS-032 (BMS-387032), triazolo[1,5-a]pyrimidines, staurosporine and olomoucine. Stimulated by MYC. Inactivated by CDKN1A (p21). Serine/threonine-protein kinase involved in the control of the cell cycle; essential for meiosis, but dispensable for mitosis. Phosphorylates CABLES1, CTNNB1, CDK2AP2, ERCC6, NBN, USP37, p53/TP53, NPM1, CDK7, RB1, BRCA2, MYC, NPAT, EZH2. Triggers duplication of centrosomes and DNA. Acts at the G1-S transition to promote the E2F transcriptional program and the initiation of DNA synthesis, and modulates G2 progression; controls the timing of entry into mitosis/meiosis by controlling the subsequent activation of cyclin B/CDK1 by phosphorylation, and coordinates the activation of cyclin B/CDK1 at the centrosome and in the nucleus. Crucial role in orchestrating a fine balance between cellular proliferation, cell death, and DNA repair in embryonic stem cells (ESCs). Activity of CDK2 is maximal during S phase and G2; activated by interaction with cyclin E during the early stages of DNA synthesis to permit G1-S transition, and subsequently activated by cyclin A2 (cyclin A1 in germ cells) during the late stages of DNA replication to drive the transition from S phase to mitosis, the G2 phase. EZH2 phosphorylation promotes H3K27me3 maintenance and epigenetic gene silencing. Cyclin E/CDK2 prevents oxidative stress-mediated Ras-induced senescence by phosphorylating MYC. Involved in G1-S phase DNA damage checkpoint that prevents cells with damaged DNA from initiating mitosis; regulates homologous recombination-dependent repair by phosphorylating BRCA2, this phosphorylation is low in S phase when recombination is active, but increases as cells progress towards mitosis. In response to DNA damage, double-strand break repair by homologous recombination a reduction of CDK2-mediated BRCA2 phosphorylation. Involved in regulation of telomere repair by mediating phosphorylation of NBN. Phosphorylation of RB1 disturbs its interaction with E2F1. NPM1 phosphorylation by cyclin E/CDK2 promotes its dissociates from unduplicated centrosomes, thus initiating centrosome duplication. Cyclin E/CDK2-mediated phosphorylation of NPAT at G1-S transition and until prophase stimulates the NPAT-mediated activation of histone gene transcription during S phase. Required for vitamin D-mediated growth inhibition by being itself inactivated. Involved in the nitric oxide- (NO) mediated signaling in a nitrosylation/activation-dependent manner. USP37 is activated by phosphorylation and thus triggers G1-S transition. CTNNB1 phosphorylation regulates insulin internalization. Phosphorylates FOXP3 and negatively regulates its transcriptional activity and protein stability. Phosphorylates ERCC6 which is essential for its chromatin remodeling activity at DNA double-strand breaks. Acts as a regulator of the phosphatidylinositol 3-kinase/protein kinase B signal transduction by mediating phosphorylation of the C-terminus of protein kinase B (PKB/AKT1 and PKB/AKT2), promoting its activation. This is Cyclin-dependent kinase 2 (CDK2) from Homo sapiens (Human).